A 691-amino-acid polypeptide reads, in one-letter code: Glycine--tRNA ligase beta subunit (691 aa).

Belongs to the class-II aminoacyl-tRNA synthetase family. As to quaternary structure, tetramer of two alpha and two beta subunits.

It localises to the cytoplasm. The catalysed reaction is tRNA(Gly) + glycine + ATP = glycyl-tRNA(Gly) + AMP + diphosphate. The polypeptide is Glycine--tRNA ligase beta subunit (Limosilactobacillus reuteri (strain DSM 20016) (Lactobacillus reuteri)).